A 123-amino-acid polypeptide reads, in one-letter code: MSDADLPNDGGIKLVMAIIRPDKLADVKTALAEVGAPSLTVTNVSGRGSQPAKKSQWRGEEYTVDLHQKVKVECVVADTPAEDVADAIADAAHTGEKGDGKIFILPVENAIQVRTGKTGRDAV.

Residues 38–40 (SLT) and Ser-49 contribute to the ATP site. Ser-49 lines the ADP pocket. Tyr-62 bears the O-UMP-tyrosine mark. ATP is bound by residues Val-75, 98-101 (GDGK), and Arg-114. Residue 98-101 (GDGK) participates in ADP binding. Residue 98 to 101 (GDGK) coordinates AMP.

It belongs to the P(II) protein family. Homotrimer. Interacts with the glutamine synthetase 3 (GS3) in the presence of 2-oxoglutarate. Interacts in vitro with Amt1 after ammonium shock. May also interact with Amt2. In terms of processing, uridylylated on Tyr-62.

The protein localises to the cytoplasm. Its activity is regulated as follows. Binds the effectors ADP and ATP. Also binds AMP with high affinity, raising the possibility that AMP could be an important PII effector, at least in archaea. The change in the ATP/AMP ratio may be more relevant for describing the energy status in the cells than the ATP/ADP ratio alone. Involved in the regulation of nitrogen metabolism. Regulates the activity of its targets by protein-protein interaction in response to the nitrogen status of the cell. Increases the activity of the glutamine synthetase 3 in the presence of 2-oxoglutarate. May regulate the activity of the ammonia channel Amt2 via direct interaction. This Haloferax mediterranei (strain ATCC 33500 / DSM 1411 / JCM 8866 / NBRC 14739 / NCIMB 2177 / R-4) (Halobacterium mediterranei) protein is Nitrogen regulatory protein GlnK2.